Here is a 266-residue protein sequence, read N- to C-terminus: Hydroxyethylthiazole kinase (266 aa).

Methionine 41 is a binding site for substrate. 2 residues coordinate ATP: arginine 117 and serine 163. Position 190 (alanine 190) interacts with substrate.

The protein belongs to the Thz kinase family. Mg(2+) is required as a cofactor.

It catalyses the reaction 5-(2-hydroxyethyl)-4-methylthiazole + ATP = 4-methyl-5-(2-phosphooxyethyl)-thiazole + ADP + H(+). The protein operates within cofactor biosynthesis; thiamine diphosphate biosynthesis; 4-methyl-5-(2-phosphoethyl)-thiazole from 5-(2-hydroxyethyl)-4-methylthiazole: step 1/1. Its function is as follows. Catalyzes the phosphorylation of the hydroxyl group of 4-methyl-5-beta-hydroxyethylthiazole (THZ). In Histophilus somni (strain 129Pt) (Haemophilus somnus), this protein is Hydroxyethylthiazole kinase.